Reading from the N-terminus, the 194-residue chain is Gonadal protein gdl (194 aa).

It belongs to the gonadal family. In stage 6-14 egg chamber nurse cells and oocytes of adult females and spermatocyte cysts and bundles of maturing sperm of larval, pupal and adult males.

The sequence is that of Gonadal protein gdl (gdl) from Drosophila melanogaster (Fruit fly).